The following is a 659-amino-acid chain: UvrABC system protein B (659 aa).

One can recognise a Helicase ATP-binding domain in the interval 27-414; it reads EGLEQNKKSQ…AHGEIVKQII (388 aa). 40–47 lines the ATP pocket; the sequence is GVTGSGKT. Residues 93 to 116 carry the Beta-hairpin motif; that stretch reads YFDYYRPEAYMPNTDTYIDKTTKS. Positions 432–594 constitute a Helicase C-terminal domain; that stretch reads QVEDMFDEIQ…IIPKTIIKPI (163 aa). Residues 624–659 enclose the UVR domain; sequence EALVKDLRNQMLDASKQLNFERAAELRDIILELEAN.

Belongs to the UvrB family. Forms a heterotetramer with UvrA during the search for lesions. Interacts with UvrC in an incision complex.

The protein resides in the cytoplasm. Its function is as follows. The UvrABC repair system catalyzes the recognition and processing of DNA lesions. A damage recognition complex composed of 2 UvrA and 2 UvrB subunits scans DNA for abnormalities. Upon binding of the UvrA(2)B(2) complex to a putative damaged site, the DNA wraps around one UvrB monomer. DNA wrap is dependent on ATP binding by UvrB and probably causes local melting of the DNA helix, facilitating insertion of UvrB beta-hairpin between the DNA strands. Then UvrB probes one DNA strand for the presence of a lesion. If a lesion is found the UvrA subunits dissociate and the UvrB-DNA preincision complex is formed. This complex is subsequently bound by UvrC and the second UvrB is released. If no lesion is found, the DNA wraps around the other UvrB subunit that will check the other stand for damage. This Mycoplasma mobile (strain ATCC 43663 / 163K / NCTC 11711) (Mesomycoplasma mobile) protein is UvrABC system protein B.